Reading from the N-terminus, the 205-residue chain is Putative lipoprotein LppC (205 aa).

The first 27 residues, 1 to 27, serve as a signal peptide directing secretion; the sequence is MESPMTSTLHRTPLATAGLALVVALGG. Cysteine 28 carries N-palmitoyl cysteine lipidation. Residue cysteine 28 is the site of S-diacylglycerol cysteine attachment. The tract at residues 126–145 is disordered; sequence GSTADGQTPAGGHSVPNSGG.

Belongs to the UPF0098 family.

It localises to the cell membrane. This is Putative lipoprotein LppC (lppC) from Mycobacterium tuberculosis (strain CDC 1551 / Oshkosh).